Here is a 404-residue protein sequence, read N- to C-terminus: Acetylornithine/succinyldiaminopimelate aminotransferase (404 aa).

Pyridoxal 5'-phosphate-binding positions include 108–109 and F141; that span reads GA. R144 provides a ligand contact to N(2)-acetyl-L-ornithine. 226–229 serves as a coordination point for pyridoxal 5'-phosphate; that stretch reads DEIQ. N6-(pyridoxal phosphate)lysine is present on K255. T283 is a N(2)-acetyl-L-ornithine binding site. T284 is a binding site for pyridoxal 5'-phosphate.

This sequence belongs to the class-III pyridoxal-phosphate-dependent aminotransferase family. ArgD subfamily. In terms of assembly, homodimer. Requires pyridoxal 5'-phosphate as cofactor.

The protein localises to the cytoplasm. The enzyme catalyses N(2)-acetyl-L-ornithine + 2-oxoglutarate = N-acetyl-L-glutamate 5-semialdehyde + L-glutamate. The catalysed reaction is N-succinyl-(2S,6S)-2,6-diaminopimelate + 2-oxoglutarate = (S)-2-succinylamino-6-oxoheptanedioate + L-glutamate. The protein operates within amino-acid biosynthesis; L-arginine biosynthesis; N(2)-acetyl-L-ornithine from L-glutamate: step 4/4. It functions in the pathway amino-acid biosynthesis; L-lysine biosynthesis via DAP pathway; LL-2,6-diaminopimelate from (S)-tetrahydrodipicolinate (succinylase route): step 2/3. Functionally, involved in both the arginine and lysine biosynthetic pathways. This is Acetylornithine/succinyldiaminopimelate aminotransferase from Buchnera aphidicola subsp. Schizaphis graminum (strain Sg).